The sequence spans 245 residues: 1-(5-phosphoribosyl)-5-[(5-phosphoribosylamino)methylideneamino] imidazole-4-carboxamide isomerase (245 aa).

The active-site Proton acceptor is the D8. The active-site Proton donor is the D129.

It belongs to the HisA/HisF family.

It localises to the cytoplasm. The catalysed reaction is 1-(5-phospho-beta-D-ribosyl)-5-[(5-phospho-beta-D-ribosylamino)methylideneamino]imidazole-4-carboxamide = 5-[(5-phospho-1-deoxy-D-ribulos-1-ylimino)methylamino]-1-(5-phospho-beta-D-ribosyl)imidazole-4-carboxamide. The protein operates within amino-acid biosynthesis; L-histidine biosynthesis; L-histidine from 5-phospho-alpha-D-ribose 1-diphosphate: step 4/9. The sequence is that of 1-(5-phosphoribosyl)-5-[(5-phosphoribosylamino)methylideneamino] imidazole-4-carboxamide isomerase from Rhodopseudomonas palustris (strain HaA2).